The sequence spans 175 residues: Large ribosomal subunit protein uL22 (175 aa).

The interval 113 to 175 is disordered; sequence VESRPVKDQR…EASETKGGSD (63 aa). Low complexity predominate over residues 136-154; that stretch reads KTAGRAPAKKAGASSGATK. The segment covering 166–175 has biased composition (basic and acidic residues); that stretch reads EASETKGGSD.

It belongs to the universal ribosomal protein uL22 family. In terms of assembly, part of the 50S ribosomal subunit.

This protein binds specifically to 23S rRNA; its binding is stimulated by other ribosomal proteins, e.g. L4, L17, and L20. It is important during the early stages of 50S assembly. It makes multiple contacts with different domains of the 23S rRNA in the assembled 50S subunit and ribosome. Functionally, the globular domain of the protein is located near the polypeptide exit tunnel on the outside of the subunit, while an extended beta-hairpin is found that lines the wall of the exit tunnel in the center of the 70S ribosome. The sequence is that of Large ribosomal subunit protein uL22 from Mycobacterium leprae (strain TN).